A 219-amino-acid chain; its full sequence is Peptide methionine sulfoxide reductase MsrA (219 aa).

Cysteine 58 is a catalytic residue.

The protein belongs to the MsrA Met sulfoxide reductase family.

The enzyme catalyses L-methionyl-[protein] + [thioredoxin]-disulfide + H2O = L-methionyl-(S)-S-oxide-[protein] + [thioredoxin]-dithiol. The catalysed reaction is [thioredoxin]-disulfide + L-methionine + H2O = L-methionine (S)-S-oxide + [thioredoxin]-dithiol. Its function is as follows. Has an important function as a repair enzyme for proteins that have been inactivated by oxidation. Catalyzes the reversible oxidation-reduction of methionine sulfoxide in proteins to methionine. The protein is Peptide methionine sulfoxide reductase MsrA of Ectopseudomonas mendocina (strain ymp) (Pseudomonas mendocina).